The sequence spans 248 residues: Putative transposase YncI (248 aa).

The protein belongs to the transposase 11 family.

The polypeptide is Putative transposase YncI (yncI) (Escherichia coli (strain K12)).